The sequence spans 529 residues: uncharacterized protein (529 aa).

The helical transmembrane segment at 354–373 threads the bilayer; it reads FHVASFPWISWAILGSYIML.

It is found in the host membrane. This is an uncharacterized protein from Acidianus convivator (ATV).